Reading from the N-terminus, the 460-residue chain is 4-O-methyl-glucuronoyl methylesterase (460 aa).

Positions 1–17 are cleaved as a signal peptide; sequence MASRFFALLLLAIPIQA. Residue glutamine 18 is modified to Pyrrolidone carboxylic acid. The region spanning 18-53 is the CBM1 domain; it reads QSPVWGQCGGIGWSGPTTCVGGATCVSYNPYYSQCI. 3 disulfide bridges follow: cysteine 96-cysteine 131, cysteine 277-cysteine 412, and cysteine 309-cysteine 384. The short motif at 276–281 is the GXSYXG catalytic site motif element; that stretch reads GCSRNG. The active-site Nucleophile is the serine 278. Substrate is bound by residues lysine 282, glutamine 324, glutamate 332, and tryptophan 375. The active-site Proton donor/acceptor is the histidine 411. Asparagine 447 is a glycosylation site (N-linked (GlcNAc...) asparagine).

The protein belongs to the carbohydrate esterase 15 (CE15) family.

The protein localises to the secreted. The enzyme catalyses a 4-O-methyl-alpha-D-glucuronosyl ester derivative + H2O = 4-O-methyl-alpha-D-glucuronate derivative + an alcohol + H(+). In terms of biological role, glucuronoyl esterase which may play a significant role in biomass degradation, as it is considered to disconnect hemicellulose from lignin through the hydrolysis of the ester bond between 4-O-methyl-D-glucuronic acid residues of glucuronoxylans and aromatic alcohols of lignin. Does not hydrolyze substrates of other carbohydrate esterases such as acetylxylan esterase, acetyl esterase and feruloyl esterase. The chain is 4-O-methyl-glucuronoyl methylesterase from Hypocrea jecorina (strain QM6a) (Trichoderma reesei).